Here is a 389-residue protein sequence, read N- to C-terminus: Lipid-A-disaccharide synthase (389 aa).

The protein belongs to the LpxB family.

The catalysed reaction is a lipid X + a UDP-2-N,3-O-bis[(3R)-3-hydroxyacyl]-alpha-D-glucosamine = a lipid A disaccharide + UDP + H(+). It functions in the pathway bacterial outer membrane biogenesis; LPS lipid A biosynthesis. Functionally, condensation of UDP-2,3-diacylglucosamine and 2,3-diacylglucosamine-1-phosphate to form lipid A disaccharide, a precursor of lipid A, a phosphorylated glycolipid that anchors the lipopolysaccharide to the outer membrane of the cell. The protein is Lipid-A-disaccharide synthase of Burkholderia multivorans (strain ATCC 17616 / 249).